A 194-amino-acid chain; its full sequence is Amidophosphoribosyltransferase (194 aa).

Positions 1 to 11 (MPHEPKGLNEE) are excised as a propeptide. The active-site Nucleophile is the Cys-12. Positions 12–194 (CGVFGVWGNP…PHGFRPMVVG (183 aa)) constitute a Glutamine amidotransferase type-2 domain.

It in the C-terminal section; belongs to the purine/pyrimidine phosphoribosyltransferase family.

It carries out the reaction 5-phospho-beta-D-ribosylamine + L-glutamate + diphosphate = 5-phospho-alpha-D-ribose 1-diphosphate + L-glutamine + H2O. Its pathway is purine metabolism; IMP biosynthesis via de novo pathway; N(1)-(5-phospho-D-ribosyl)glycinamide from 5-phospho-alpha-D-ribose 1-diphosphate: step 1/2. In terms of biological role, catalyzes the formation of phosphoribosylamine from phosphoribosylpyrophosphate (PRPP) and glutamine. This Lacticaseibacillus casei (Lactobacillus casei) protein is Amidophosphoribosyltransferase.